The chain runs to 112 residues: MASPNGGEDFESSLISLENLDRASPDLWPEQLPGVSEFAASFKNPITNSPPKWMAELESEDIEMLKELGSLTTANLMEKVKGLQNLAYQLGLEESREMTRGKFLNILERPKK.

It belongs to the lin-52 family. As to quaternary structure, component of the DREAM complex.

This chain is Protein lin-52 homolog (lin52), found in Danio rerio (Zebrafish).